A 270-amino-acid chain; its full sequence is Transmembrane protein 176B (270 aa).

4 consecutive transmembrane segments (helical) span residues 65–85 (LALG…GVCL), 95–115 (ASGC…GAIV), 127–147 (ISSL…VLCV), and 209–229 (LFLA…GVGL). Ser-236, Ser-245, Ser-254, and Ser-258 each carry phosphoserine. Residues 237–270 (SQPLNEEGSEKRLLGENSVPPSPSREQTSTAIVL) are disordered. Residues 260–270 (SREQTSTAIVL) show a composition bias toward polar residues.

This sequence belongs to the TMEM176 family. Expressed in lung and dermal fibroblasts.

It is found in the nucleus membrane. Functionally, may play a role in the process of maturation of dendritic cells. Required for the development of cerebellar granule cells. The sequence is that of Transmembrane protein 176B (TMEM176B) from Homo sapiens (Human).